The sequence spans 248 residues: 14-3-3 protein (248 aa).

Coiled-coil stretches lie at residues 13–33 (MAQLNENAERYDEMVETMRKI) and 91–111 (RQKIEKELSDICNDILKLLQE). 135 to 136 (RY) lines the O-phospho-L-serine pocket. Thr-214 is modified (phosphothreonine). Positions 237–248 (TDSAGDDNAEEK) match the Putative polyglycylation target motif (T/G)X0-1(D/E)X1-3-G(D/E)X1-2(gE)2-4, where X is polar or negatively charged amino acid, and gE is polyglycylated glutamine motif. Position 246 is a 5-glutamyl polyglycine (Glu-246).

It belongs to the 14-3-3 family. In terms of assembly, homodimer. Homodimerizes via N-terminal domains. Oligomerizes forming homotrimers, homotetramers and protein filaments. Oligomerization is hindered by polyglycylation in vivo. Interacts with a large number of both cytosolic and membrane proteins in trophozoites and encysting parasites. Interacts with a serine/threonine protein kinase GL50803_112076 (gCDC7). Component of a multiprotein complex containing gCDC7 and GL50803_94117 (gDBF4), a regulatory subunit of gCDC7, during both the trophozoite and encysting stages of the parasite. Interacts with fructose-bisphosphate aldolase GL50803_11043 (gFBA), pyruvate kinase GL50803_17143 (gPyk), acetyl-CoA synthetase GL50803_13608 (gACS), protein kinase GL50803_22165 (gSTE), DEAD box RNA helicase GL50803_34684 (gVASA) and Golgi/cell cycle associated protein GL50803_17472 (gGCCA). Interacts with actin. Interacts with both monomeric phosphorylated and unphosphorylated actin. The interaction is enhanced by phosphorylation of actin and inhibited by Rho GTPase Rac. Post-translationally, phosphorylated constitutively throughout the life cycle. Phosphorylation is very high in trophozoites and encysting cells of 12 hours. Phosphorylated during excystation. Phosphorylation promotes its binding to various target proteins and is critical for encystation process. Phosphorylation modification is not influenced by polyglycylation modification. In terms of processing, polyglycylated on a glutamate residue, resulting in polyglycine chain on the gamma-carboxyl group. Polyglycylated by the tubulin--tyrosine ligase-like protein GL50803_8456 (gTTLL3). The polyglycine chain is shortened by metallopeptidases of the M20 family, namely dipeptidases GL50803_15832 (gDIP1) and GL50803_8407 (gDIP2). The length of the polyglycine chain is developmental stage-dependent. In trophozoites, glycine residues range from 10 to 31, with the greatest occurrence of 21 residues. In 12 hour encystation stage, glycine residues range from 6 to 22, with the greatest occurrence of 10 residues. The differential rate of polyglycylation/deglycylation during the encystation process regulates the intracellular localization of this protein. Relocalizes partially from the cytoplasm inside the nuclei following the shortening of the polyglycine chain in encysting cells. Polyglycylation modification is not influenced by phosphorylation modification. Polyglycylation prevents oligomerization in vivo.

The protein localises to the cytoplasm. It localises to the cytoskeleton. Its subcellular location is the nucleus. The protein resides in the cell projection. It is found in the cilium. The protein localises to the flagellum. It localises to the spindle. Its subcellular location is the nucleus envelope. The protein resides in the endoplasmic reticulum. Functionally, adapter protein implicated in the regulation of a large spectrum of both general and specialized signaling pathways. Binds to a large number of partners, usually by recognition of a phosphoserine or phosphothreonine motif. Binding generally results in the modulation of the activity of the binding partner. Binds with varying affinity to various synthetic phosphopeptides having a consensus binding motif RSX(pS/pT)XP, called mode-1, where X is any residue and pS/pT is a phosphorylated serine/threonine, and to synthetic phosphopeptides having a consensus binding motif Xp(S/T)X1-2-COOH, called mode-3, in which the phosphorylated residue occupies the penultimate C-terminal position in the target protein, but does not bind to their unphosphorylated counterparts. Binds to synthetic human RAF1 phosphopeptides, but not to their unphosphorylated forms. Binds to difopein, a polypeptide containing a phosphorylation-independent binding motif. Involved in encystation. Involved in cell proliferation. Required for actin and tubulin cytoskeletal organization. Regulates actin filament formation and nuclear size. The chain is 14-3-3 protein from Giardia intestinalis (strain ATCC 50803 / WB clone C6) (Giardia lamblia).